The sequence spans 197 residues: LexA repressor (197 aa).

Residues 28 to 47 constitute a DNA-binding region (H-T-H motif); sequence VREIARRFRITPRGALLHLI. Residues Ser119 and Lys156 each act as for autocatalytic cleavage activity in the active site.

Belongs to the peptidase S24 family. In terms of assembly, homodimer.

The enzyme catalyses Hydrolysis of Ala-|-Gly bond in repressor LexA.. Its function is as follows. Represses a number of genes involved in the response to DNA damage (SOS response), including recA and lexA. In the presence of single-stranded DNA, RecA interacts with LexA causing an autocatalytic cleavage which disrupts the DNA-binding part of LexA, leading to derepression of the SOS regulon and eventually DNA repair. The sequence is that of LexA repressor from Thermotoga sp. (strain RQ2).